Reading from the N-terminus, the 205-residue chain is Imidazoleglycerol-phosphate dehydratase (205 aa).

This sequence belongs to the imidazoleglycerol-phosphate dehydratase family.

It localises to the cytoplasm. The catalysed reaction is D-erythro-1-(imidazol-4-yl)glycerol 3-phosphate = 3-(imidazol-4-yl)-2-oxopropyl phosphate + H2O. It functions in the pathway amino-acid biosynthesis; L-histidine biosynthesis; L-histidine from 5-phospho-alpha-D-ribose 1-diphosphate: step 6/9. The chain is Imidazoleglycerol-phosphate dehydratase from Chloroflexus aggregans (strain MD-66 / DSM 9485).